The following is a 316-amino-acid chain: Probable cell division protein WhiA (316 aa).

Residues 274–308 (SLKELGEMVSTGVISKSGVNHRLRKIDEIAEKLRN) constitute a DNA-binding region (H-T-H motif).

This sequence belongs to the WhiA family.

Involved in cell division and chromosome segregation. This Macrococcus caseolyticus (strain JCSC5402) (Macrococcoides caseolyticum) protein is Probable cell division protein WhiA.